The sequence spans 272 residues: 1,4-dihydroxy-6-naphtoate synthase (272 aa).

Substrate contacts are provided by residues 55-57 and 107-108; these read KLS and TA. His-145 (proton acceptor) is an active-site residue.

Belongs to the MqnA/MqnD family. MqnD subfamily.

It carries out the reaction cyclic dehypoxanthinylfutalosinate = 1,4-dihydroxy-6-naphthoate + dihydroxyacetone. It functions in the pathway quinol/quinone metabolism; menaquinone biosynthesis. Catalyzes the conversion of cyclic dehypoxanthine futalosine (cyclic DHFL) into 1,4-dihydroxy-6-naphthoate, a step in the biosynthesis of menaquinone (MK, vitamin K2). This Thermus thermophilus (strain ATCC 27634 / DSM 579 / HB8) protein is 1,4-dihydroxy-6-naphtoate synthase.